Reading from the N-terminus, the 90-residue chain is Small ribosomal subunit protein bS6 (90 aa).

Lys33 is covalently cross-linked (Isoglutamyl lysine isopeptide (Lys-Gln) (interchain with Q-Cter in protein Pup)).

Belongs to the bacterial ribosomal protein bS6 family.

In terms of biological role, binds together with bS18 to 16S ribosomal RNA. The polypeptide is Small ribosomal subunit protein bS6 (rpsF) (Mycolicibacterium smegmatis (strain ATCC 700084 / mc(2)155) (Mycobacterium smegmatis)).